The chain runs to 215 residues: uncharacterized protein (215 aa).

A run of 2 helical transmembrane segments spans residues 40 to 60 (VLFP…FCSL) and 72 to 92 (LIWF…VGYL).

It localises to the mitochondrion membrane. This is an uncharacterized protein from Arabidopsis thaliana (Mouse-ear cress).